A 469-amino-acid polypeptide reads, in one-letter code: 3-isopropylmalate dehydratase large subunit (469 aa).

Residues Cys349, Cys410, and Cys413 each contribute to the [4Fe-4S] cluster site.

This sequence belongs to the aconitase/IPM isomerase family. LeuC type 1 subfamily. In terms of assembly, heterodimer of LeuC and LeuD. Requires [4Fe-4S] cluster as cofactor.

It carries out the reaction (2R,3S)-3-isopropylmalate = (2S)-2-isopropylmalate. Its pathway is amino-acid biosynthesis; L-leucine biosynthesis; L-leucine from 3-methyl-2-oxobutanoate: step 2/4. Catalyzes the isomerization between 2-isopropylmalate and 3-isopropylmalate, via the formation of 2-isopropylmaleate. The polypeptide is 3-isopropylmalate dehydratase large subunit (Azoarcus sp. (strain BH72)).